Here is a 427-residue protein sequence, read N- to C-terminus: MAIESEVLVIGGGLAGITSALAAADAGADTRLVSYKQSTLRNASGLVDVLGYTPSGDGPVVDPFDAIPSLPDAHPYRTVGVDTVRDAMAFFDAHAPRYQGHHTDANALVPTHGGTVKPTARYPASAAAGLASDDRDTLLVGFETLPDFNADHAAAHLESAGVPFDVRGVTVPFPGDLRAGAKVTRYAGLLDANPQVSVDGTERPLRLALATRVADAAADADRVGFPAVLGDDDPAGVRDALADHLGAAVFEVPMGPPSLPGLRLSDHLFGALEAAGVRIETGNPVVDADTTAGGVETVYVEKNGARIPNSADEYVLATGGLVGKGIDSDRDAVYEPIFDCRIAHSDDRYAWFDDDAFGDHAFAQFGVRTDDTLRPRDDDGAAAHANLRAAGAVLGGYNFAAEHSGSGVSIATGYAAGTAAAEAIHDE.

It belongs to the anaerobic G-3-P dehydrogenase subunit B family. Requires FMN as cofactor.

The enzyme catalyses a quinone + sn-glycerol 3-phosphate = dihydroxyacetone phosphate + a quinol. It participates in polyol metabolism; glycerol degradation via glycerol kinase pathway; glycerone phosphate from sn-glycerol 3-phosphate (anaerobic route): step 1/1. The protein is Probable anaerobic glycerol-3-phosphate dehydrogenase subunit B of Halobacterium salinarum (strain ATCC 29341 / DSM 671 / R1).